A 134-amino-acid chain; its full sequence is Small ribosomal subunit protein uS9 (134 aa).

Residues 114–134 (QKEAKNFGGPGARSKYQKSYR) form a disordered region.

It belongs to the universal ribosomal protein uS9 family.

This Methanosarcina mazei (strain ATCC BAA-159 / DSM 3647 / Goe1 / Go1 / JCM 11833 / OCM 88) (Methanosarcina frisia) protein is Small ribosomal subunit protein uS9.